A 413-amino-acid chain; its full sequence is Cis,cis-muconate transport protein (413 aa).

The Cytoplasmic segment spans residues 1 to 16 (MYSNNQRSRIGSHTWK). The helical transmembrane segment at 17–37 (IAFLFAFLALLVDGADLMLLS) threads the bilayer. Over 38–53 (YSLNSIKAEFNLSTVE) the chain is Periplasmic. Residues 54–74 (AGMLGSFTLAGMAIGGIFGGW) traverse the membrane as a helical segment. Residues 75-85 (ACDRFGRVRIV) are Cytoplasmic-facing. A helical transmembrane segment spans residues 86–106 (VISILTFSILTCGLGLTQSFI). Topologically, residues 107–112 (QFGVLR) are periplasmic. The helical transmembrane segment at 113-133 (FFASLGLGSLYIACNTLMAEY) threads the bilayer. The Cytoplasmic segment spans residues 134–145 (VPTKYRTTVLGT). Residues 146-166 (LQAGWTVGYIVATLLAGWLIP) form a helical membrane-spanning segment. At 167-171 (DHGWR) the chain is on the periplasmic side. The helical transmembrane segment at 172-192 (VLFYVAIIPVLMAVLMHFFVP) threads the bilayer. Topologically, residues 193–228 (EPAAWQQSRLAPSKQTETVKTSAFKLIFQDKRNRNM) are cytoplasmic. Residues 229 to 249 (FILWALTAGFLQFGYYGVNNW) traverse the membrane as a helical segment. The Periplasmic segment spans residues 250–266 (MPSYLESELGMKFKEMT). The chain crosses the membrane as a helical span at residues 267–287 (AYMVGTYTAMILGKILAGFMA). Over 288–293 (DKLGRR) the chain is Cytoplasmic. The helical transmembrane segment at 294–314 (FTYAFGAIGTAIFLPLIVFYN) threads the bilayer. Residues 315–318 (SPDN) lie on the Periplasmic side of the membrane. Residues 319–339 (ILYLLVIFGFLYGIPYGVNAT) form a helical membrane-spanning segment. The Cytoplasmic segment spans residues 340–352 (YMTESFPTAIRGT). The helical transmembrane segment at 353–376 (AIGGAYNVGRLGAAIAPATIGFLA) threads the bilayer. The Periplasmic segment spans residues 377 to 382 (SGGSIG). A helical transmembrane segment spans residues 383–403 (LGFVVMGAAYFICGVIPALFI). Topologically, residues 404–413 (KEKQYDPQQS) are cytoplasmic.

This sequence belongs to the major facilitator superfamily. Aromatic acid:H(+) symporter (AAHS) (TC 2.A.1.15) family.

The protein resides in the cell inner membrane. Functionally, probable uptake of muconate. This is Cis,cis-muconate transport protein (mucK) from Acinetobacter baylyi (strain ATCC 33305 / BD413 / ADP1).